The primary structure comprises 192 residues: MSKPSDRINLTNQFLIAMPNMADPTFSGTVVYLCDHSERGALGLVINRPTDIDLESLFNRIDLKLDIEPLLHIPVYFGGPVQTERGFVLHEPVEGANYNSSMSVEGGLEMTTSKDVLEAVATGTGPKRFLLTLGHAGWGAGQLEEEISRNGWLTVAADPRIVFDTPAEERFEAALGLLGVSSSMLSGEAGHA.

This sequence belongs to the UPF0301 (AlgH) family.

The chain is UPF0301 protein Bamb_0737 from Burkholderia ambifaria (strain ATCC BAA-244 / DSM 16087 / CCUG 44356 / LMG 19182 / AMMD) (Burkholderia cepacia (strain AMMD)).